A 435-amino-acid polypeptide reads, in one-letter code: Adenylosuccinate synthetase (435 aa).

Residues Gly17 to Lys23 and Gly45 to Thr47 contribute to the GTP site. Asp18 (proton acceptor) is an active-site residue. The Mg(2+) site is built by Asp18 and Gly45. IMP-binding positions include Asp18–Lys21, Asn43–His46, Thr135, Arg149, Gln230, Thr245, and Arg309. His46 (proton donor) is an active-site residue. Thr305–Arg311 contacts substrate. Residues Arg311, Leu337–Asp339, and Ser419–Gly421 each bind GTP.

Belongs to the adenylosuccinate synthetase family. In terms of assembly, homodimer. Mg(2+) is required as a cofactor.

It is found in the cytoplasm. The enzyme catalyses IMP + L-aspartate + GTP = N(6)-(1,2-dicarboxyethyl)-AMP + GDP + phosphate + 2 H(+). The protein operates within purine metabolism; AMP biosynthesis via de novo pathway; AMP from IMP: step 1/2. Plays an important role in the de novo pathway of purine nucleotide biosynthesis. Catalyzes the first committed step in the biosynthesis of AMP from IMP. The sequence is that of Adenylosuccinate synthetase from Spiroplasma citri.